The sequence spans 192 residues: uncharacterized protein (192 aa).

Helical transmembrane passes span 31-51 (IVET…YVYE) and 119-139 (VPGA…LWEI).

It is found in the cell membrane. This is an uncharacterized protein from Thermotoga maritima (strain ATCC 43589 / DSM 3109 / JCM 10099 / NBRC 100826 / MSB8).